A 194-amino-acid polypeptide reads, in one-letter code: UPF0232 protein in recF-gyrB intergenic region (194 aa).

The segment covering 1 to 14 has biased composition (acidic residues); it reads MTGPFDDDGPEEDA. The segment at 1 to 81 is disordered; the sequence is MTGPFDDDGP…GPGPDARDPQ (81 aa). Residues 30–52 are compositionally biased toward basic and acidic residues; that stretch reads DLVRRTLEEARGAARSQGKDVGR.

Belongs to the UPF0232 family.

The polypeptide is UPF0232 protein in recF-gyrB intergenic region (Mycolicibacterium smegmatis (Mycobacterium smegmatis)).